The sequence spans 195 residues: Phosphoheptose isomerase (195 aa).

An SIS domain is found at 36–195; sequence LVDSLKGDGI…IIEKELFGLD (160 aa). 51–53 provides a ligand contact to substrate; it reads NGG. Residues His-60 and Glu-64 each contribute to the Zn(2+) site. Substrate contacts are provided by residues Glu-64, 95–96, 121–123, Ser-126, and Gln-173; these read ND and TTS. Residues Gln-173 and His-181 each contribute to the Zn(2+) site.

Belongs to the SIS family. GmhA subfamily. Zn(2+) is required as a cofactor.

The protein resides in the cytoplasm. The enzyme catalyses 2 D-sedoheptulose 7-phosphate = D-glycero-alpha-D-manno-heptose 7-phosphate + D-glycero-beta-D-manno-heptose 7-phosphate. It functions in the pathway carbohydrate biosynthesis; D-glycero-D-manno-heptose 7-phosphate biosynthesis; D-glycero-alpha-D-manno-heptose 7-phosphate and D-glycero-beta-D-manno-heptose 7-phosphate from sedoheptulose 7-phosphate: step 1/1. Catalyzes the isomerization of sedoheptulose 7-phosphate in D-glycero-D-manno-heptose 7-phosphate. In Leptospira biflexa serovar Patoc (strain Patoc 1 / Ames), this protein is Phosphoheptose isomerase.